The primary structure comprises 416 residues: Gamma-glutamyl phosphate reductase (416 aa).

The protein belongs to the gamma-glutamyl phosphate reductase family.

The protein localises to the cytoplasm. It carries out the reaction L-glutamate 5-semialdehyde + phosphate + NADP(+) = L-glutamyl 5-phosphate + NADPH + H(+). Its pathway is amino-acid biosynthesis; L-proline biosynthesis; L-glutamate 5-semialdehyde from L-glutamate: step 2/2. Catalyzes the NADPH-dependent reduction of L-glutamate 5-phosphate into L-glutamate 5-semialdehyde and phosphate. The product spontaneously undergoes cyclization to form 1-pyrroline-5-carboxylate. In Streptococcus pyogenes serotype M49 (strain NZ131), this protein is Gamma-glutamyl phosphate reductase.